Reading from the N-terminus, the 66-residue chain is Large ribosomal subunit protein bL35 (66 aa).

The protein belongs to the bacterial ribosomal protein bL35 family.

The sequence is that of Large ribosomal subunit protein bL35 from Brucella anthropi (strain ATCC 49188 / DSM 6882 / CCUG 24695 / JCM 21032 / LMG 3331 / NBRC 15819 / NCTC 12168 / Alc 37) (Ochrobactrum anthropi).